Reading from the N-terminus, the 313-residue chain is Formimidoylglutamase (313 aa).

Mn(2+)-binding residues include H130, D155, H157, D159, D241, and D243.

It belongs to the arginase family. The cofactor is Mn(2+).

It carries out the reaction N-formimidoyl-L-glutamate + H2O = formamide + L-glutamate. The protein operates within amino-acid degradation; L-histidine degradation into L-glutamate; L-glutamate from N-formimidoyl-L-glutamate (hydrolase route): step 1/1. Catalyzes the conversion of N-formimidoyl-L-glutamate to L-glutamate and formamide. The sequence is that of Formimidoylglutamase from Salmonella arizonae (strain ATCC BAA-731 / CDC346-86 / RSK2980).